A 172-amino-acid chain; its full sequence is MNYFELFGLVEGFELDTRQLAETYRQLQTQFHPDRFATAPEWEQLAAVQRAAQINDAFTTLKAPLRRAEYLLSLRGTELRGEQQTLQDTAFLMQQLEWRERLADLKGETDPERAIKDFRQEIRHDHQLLMQQLTQALATGEDPRAADCVRKLKFVDKLLEELERFEDSLFES.

A J domain is found at 2-74 (NYFELFGLVE…LRRAEYLLSL (73 aa)).

This sequence belongs to the HscB family. Interacts with HscA and stimulates its ATPase activity.

Functionally, co-chaperone involved in the maturation of iron-sulfur cluster-containing proteins. Seems to help targeting proteins to be folded toward HscA. The polypeptide is Co-chaperone protein HscB homolog (Aeromonas hydrophila subsp. hydrophila (strain ATCC 7966 / DSM 30187 / BCRC 13018 / CCUG 14551 / JCM 1027 / KCTC 2358 / NCIMB 9240 / NCTC 8049)).